We begin with the raw amino-acid sequence, 1205 residues long: PAN2-PAN3 deadenylation complex catalytic subunit Pan2 (1205 aa).

WD repeat units lie at residues 153 to 193 (DESE…QKYA), 195 to 231 (ETPG…VEHE), 244 to 280 (VHGN…AITP), and 328 to 367 (PVGP…SFNP). The tract at residues 368-484 (YSRETEFALP…PTGREEEPLH (117 aa)) is linker. The region spanning 485-924 (TVSKKYRKVT…VPAILYYVKR (440 aa)) is the USP domain. Serine 784 carries the phosphoserine modification. The 173-residue stretch at 975 to 1147 (VGLDAEFVTL…EDARTALQLY (173 aa)) folds into the Exonuclease domain. A divalent metal cation is bound by residues aspartate 978, glutamate 980, aspartate 1087, and aspartate 1139. Positions 1179–1205 (WKVPEPESQSSPKSKAGLRPGALGWVG) are disordered. Over residues 1184–1193 (PESQSSPKSK) the composition is skewed to low complexity. Serine 1189 bears the Phosphoserine mark.

This sequence belongs to the peptidase C19 family. PAN2 subfamily. In terms of assembly, forms a heterotrimer with an asymmetric homodimer of the regulatory subunit PAN3 to form the poly(A)-nuclease (PAN) deadenylation complex. Interacts with PAN3 isoform 1/Pan3L and isoform 3/Pan3S. Interacts with ZFP36. Requires a divalent metal cation as cofactor.

The protein localises to the cytoplasm. The protein resides in the P-body. It localises to the nucleus. The enzyme catalyses Exonucleolytic cleavage of poly(A) to 5'-AMP.. Positively regulated by the regulatory subunit PAN3. Functionally, catalytic subunit of the poly(A)-nuclease (PAN) deadenylation complex, one of two cytoplasmic mRNA deadenylases involved in general and miRNA-mediated mRNA turnover. PAN specifically shortens poly(A) tails of RNA and the activity is stimulated by poly(A)-binding protein (PABP). PAN deadenylation is followed by rapid degradation of the shortened mRNA tails by the CCR4-NOT complex. Deadenylated mRNAs are then degraded by two alternative mechanisms, namely exosome-mediated 3'-5' exonucleolytic degradation, or deadenylation-dependent mRNA decaping and subsequent 5'-3' exonucleolytic degradation by XRN1. Also acts as an important regulator of the HIF1A-mediated hypoxic response. Required for HIF1A mRNA stability independent of poly(A) tail length regulation. The polypeptide is PAN2-PAN3 deadenylation complex catalytic subunit Pan2 (Rattus norvegicus (Rat)).